The sequence spans 289 residues: ATP synthase gamma chain (289 aa).

The protein belongs to the ATPase gamma chain family. F-type ATPases have 2 components, CF(1) - the catalytic core - and CF(0) - the membrane proton channel. CF(1) has five subunits: alpha(3), beta(3), gamma(1), delta(1), epsilon(1). CF(0) has three main subunits: a, b and c.

It localises to the cell inner membrane. Produces ATP from ADP in the presence of a proton gradient across the membrane. The gamma chain is believed to be important in regulating ATPase activity and the flow of protons through the CF(0) complex. This chain is ATP synthase gamma chain, found in Erwinia tasmaniensis (strain DSM 17950 / CFBP 7177 / CIP 109463 / NCPPB 4357 / Et1/99).